Reading from the N-terminus, the 320-residue chain is ATP-dependent 6-phosphofructokinase (320 aa).

ATP is bound at residue Gly12. Arg22–Arg26 contacts ADP. ATP contacts are provided by residues Arg73–Phe74 and Gly103–Ser106. A Mg(2+)-binding site is contributed by Asp104. Thr126–Asp128 contacts substrate. Asp128 serves as the catalytic Proton acceptor. Arg155 is an ADP binding site. Residues Arg163 and Met170–Arg172 contribute to the substrate site. Residues Gly186–Glu188, Lys212, and Lys214–His216 contribute to the ADP site. Residues Glu223, Arg244, and His250–Arg253 each bind substrate.

It belongs to the phosphofructokinase type A (PFKA) family. ATP-dependent PFK group I subfamily. Prokaryotic clade 'B1' sub-subfamily. Homotetramer. It depends on Mg(2+) as a cofactor.

The protein resides in the cytoplasm. The catalysed reaction is beta-D-fructose 6-phosphate + ATP = beta-D-fructose 1,6-bisphosphate + ADP + H(+). It functions in the pathway carbohydrate degradation; glycolysis; D-glyceraldehyde 3-phosphate and glycerone phosphate from D-glucose: step 3/4. Its activity is regulated as follows. Allosterically activated by ADP and other diphosphonucleosides, and allosterically inhibited by phosphoenolpyruvate. In terms of biological role, catalyzes the phosphorylation of D-fructose 6-phosphate to fructose 1,6-bisphosphate by ATP, the first committing step of glycolysis. In Vibrio vulnificus (strain CMCP6), this protein is ATP-dependent 6-phosphofructokinase.